Reading from the N-terminus, the 126-residue chain is Protein ApaG (126 aa).

The ApaG domain maps to 2–126; it reads SDPRYQIDVS…FRLAVPGALH (125 aa).

This Pseudomonas entomophila (strain L48) protein is Protein ApaG.